The primary structure comprises 345 residues: Heat-inducible transcription repressor HrcA (345 aa).

The protein belongs to the HrcA family.

Negative regulator of class I heat shock genes (grpE-dnaK-dnaJ and groELS operons). Prevents heat-shock induction of these operons. In Corynebacterium diphtheriae (strain ATCC 700971 / NCTC 13129 / Biotype gravis), this protein is Heat-inducible transcription repressor HrcA.